Consider the following 199-residue polypeptide: Pyridoxine/pyridoxamine 5'-phosphate oxidase (199 aa).

FMN is bound by residues 44–49 (RTVLLK), 59–60 (YS), Lys66, and Gln91. Residue Lys49 participates in substrate binding. Residues Tyr109, Arg113, and Ser117 each coordinate substrate. FMN is bound by residues 126 to 127 (QS) and Trp171. 177–179 (RLH) is a binding site for substrate. Arg181 is an FMN binding site.

Belongs to the pyridoxamine 5'-phosphate oxidase family. Homodimer. Requires FMN as cofactor.

The catalysed reaction is pyridoxamine 5'-phosphate + O2 + H2O = pyridoxal 5'-phosphate + H2O2 + NH4(+). It carries out the reaction pyridoxine 5'-phosphate + O2 = pyridoxal 5'-phosphate + H2O2. It functions in the pathway cofactor metabolism; pyridoxal 5'-phosphate salvage; pyridoxal 5'-phosphate from pyridoxamine 5'-phosphate: step 1/1. Its pathway is cofactor metabolism; pyridoxal 5'-phosphate salvage; pyridoxal 5'-phosphate from pyridoxine 5'-phosphate: step 1/1. Catalyzes the oxidation of either pyridoxine 5'-phosphate (PNP) or pyridoxamine 5'-phosphate (PMP) into pyridoxal 5'-phosphate (PLP). The chain is Pyridoxine/pyridoxamine 5'-phosphate oxidase from Xanthomonas oryzae pv. oryzae (strain KACC10331 / KXO85).